Here is a 701-residue protein sequence, read N- to C-terminus: Glycine--tRNA ligase beta subunit (701 aa).

Belongs to the class-II aminoacyl-tRNA synthetase family. As to quaternary structure, tetramer of two alpha and two beta subunits.

It localises to the cytoplasm. It carries out the reaction tRNA(Gly) + glycine + ATP = glycyl-tRNA(Gly) + AMP + diphosphate. The chain is Glycine--tRNA ligase beta subunit from Anaeromyxobacter sp. (strain K).